The following is a 453-amino-acid chain: Trigger factor (453 aa).

The PPIase FKBP-type domain occupies 171–256 (GDRVTVSFKG…ATLVEAPKDT (86 aa)).

It belongs to the FKBP-type PPIase family. Tig subfamily.

It is found in the cytoplasm. It carries out the reaction [protein]-peptidylproline (omega=180) = [protein]-peptidylproline (omega=0). Functionally, involved in protein export. Acts as a chaperone by maintaining the newly synthesized protein in an open conformation. Functions as a peptidyl-prolyl cis-trans isomerase. The sequence is that of Trigger factor from Rhodopseudomonas palustris (strain BisA53).